The primary structure comprises 960 residues: Valine--tRNA ligase (960 aa).

A 'HIGH' region motif is present at residues 42-52 (PNITGNLHMGH). The 'KMSKS' region signature appears at 553–557 (KMSKS). K556 lines the ATP pocket. Positions 879–950 (VLKAIDKEIE…LSQQLESLHD (72 aa)) form a coiled coil.

This sequence belongs to the class-I aminoacyl-tRNA synthetase family. ValS type 1 subfamily. As to quaternary structure, monomer.

The protein resides in the cytoplasm. The enzyme catalyses tRNA(Val) + L-valine + ATP = L-valyl-tRNA(Val) + AMP + diphosphate. In terms of biological role, catalyzes the attachment of valine to tRNA(Val). As ValRS can inadvertently accommodate and process structurally similar amino acids such as threonine, to avoid such errors, it has a 'posttransfer' editing activity that hydrolyzes mischarged Thr-tRNA(Val) in a tRNA-dependent manner. This chain is Valine--tRNA ligase, found in Buchnera aphidicola subsp. Schizaphis graminum (strain Sg).